Here is a 145-residue protein sequence, read N- to C-terminus: CBS domain-containing protein DDB_G0289609 (145 aa).

2 CBS domains span residues 9–66 (MSKS…FLPE) and 84–141 (MKQN…LEPV).

This is CBS domain-containing protein DDB_G0289609 from Dictyostelium discoideum (Social amoeba).